We begin with the raw amino-acid sequence, 782 residues long: Endonuclease MutS2 (782 aa).

336–343 (GPNTGGKT) lines the ATP pocket. One can recognise a Smr domain in the interval 707–782 (LDLRGYRYEE…GFGVTVAELK (76 aa)).

Belongs to the DNA mismatch repair MutS family. MutS2 subfamily. In terms of assembly, homodimer. Binds to stalled ribosomes, contacting rRNA.

In terms of biological role, endonuclease that is involved in the suppression of homologous recombination and thus may have a key role in the control of bacterial genetic diversity. Its function is as follows. Acts as a ribosome collision sensor, splitting the ribosome into its 2 subunits. Detects stalled/collided 70S ribosomes which it binds and splits by an ATP-hydrolysis driven conformational change. Acts upstream of the ribosome quality control system (RQC), a ribosome-associated complex that mediates the extraction of incompletely synthesized nascent chains from stalled ribosomes and their subsequent degradation. Probably generates substrates for RQC. This Staphylococcus epidermidis (strain ATCC 12228 / FDA PCI 1200) protein is Endonuclease MutS2.